Here is a 530-residue protein sequence, read N- to C-terminus: Bifunctional purine biosynthesis protein PurH (530 aa).

One can recognise an MGS-like domain in the interval 1–149 (MASDFLPVHR…KNFARVAVAT (149 aa)).

Belongs to the PurH family.

The enzyme catalyses (6R)-10-formyltetrahydrofolate + 5-amino-1-(5-phospho-beta-D-ribosyl)imidazole-4-carboxamide = 5-formamido-1-(5-phospho-D-ribosyl)imidazole-4-carboxamide + (6S)-5,6,7,8-tetrahydrofolate. It catalyses the reaction IMP + H2O = 5-formamido-1-(5-phospho-D-ribosyl)imidazole-4-carboxamide. Its pathway is purine metabolism; IMP biosynthesis via de novo pathway; 5-formamido-1-(5-phospho-D-ribosyl)imidazole-4-carboxamide from 5-amino-1-(5-phospho-D-ribosyl)imidazole-4-carboxamide (10-formyl THF route): step 1/1. It participates in purine metabolism; IMP biosynthesis via de novo pathway; IMP from 5-formamido-1-(5-phospho-D-ribosyl)imidazole-4-carboxamide: step 1/1. In Xylella fastidiosa (strain M12), this protein is Bifunctional purine biosynthesis protein PurH.